The sequence spans 259 residues: Leucine-rich repeat-containing protein 3B (259 aa).

The N-terminal stretch at 1-33 is a signal peptide; the sequence is MNLVDLWLTRSLSMCLLLQSFVLMILCFHSASM. The region spanning 34–64 is the LRRNT domain; the sequence is CPKGCLCSSSGGLNVTCSNANLKEIPRDLPP. N-linked (GlcNAc...) asparagine glycosylation is present at Asn-47. 3 LRR repeats span residues 65–86, 89–110, and 114–135; these read ETVL…IFKD, QLRV…AFKG, and TLQT…AFNN. N-linked (GlcNAc...) asparagine glycosylation occurs at Asn-94. Residues 145–197 form the LRRCT domain; sequence NPWHCDCTLQQVLRSMVSNHETAHNVICKTSVLDEHAGRPFLNAANDADLCNL. The chain crosses the membrane as a helical span at residues 205–225; that stretch reads AMLVTMFGWFTMVISYVVYYV.

The protein belongs to the LRRC3 family.

The protein resides in the membrane. This chain is Leucine-rich repeat-containing protein 3B (LRRC3B), found in Bos taurus (Bovine).